Reading from the N-terminus, the 160-residue chain is Transcription elongation factor GreA (160 aa).

Residues 1–72 (MAEKTYVMTL…QIQILETKIR (72 aa)) are a coiled coil.

Belongs to the GreA/GreB family.

Functionally, necessary for efficient RNA polymerase transcription elongation past template-encoded arresting sites. The arresting sites in DNA have the property of trapping a certain fraction of elongating RNA polymerases that pass through, resulting in locked ternary complexes. Cleavage of the nascent transcript by cleavage factors such as GreA or GreB allows the resumption of elongation from the new 3'terminus. GreA releases sequences of 2 to 3 nucleotides. This is Transcription elongation factor GreA from Streptococcus thermophilus (strain ATCC BAA-491 / LMD-9).